The following is a 138-amino-acid chain: Small ribosomal subunit protein uS11c (138 aa).

The disordered stretch occupies residues 1-22; that stretch reads MAKPIPKIGSRKNARSGSRKHL. A compositionally biased stretch (basic residues) spans 9–22; it reads GSRKNARSGSRKHL.

The protein belongs to the universal ribosomal protein uS11 family. As to quaternary structure, part of the 30S ribosomal subunit.

The protein localises to the plastid. The protein resides in the chloroplast. The chain is Small ribosomal subunit protein uS11c from Lotus japonicus (Lotus corniculatus var. japonicus).